The primary structure comprises 566 residues: MGSKHKKNASKSLRAFSFIILSASIALVYIFNPVKLIFPSSIIRFHHGLPPQSQEIVTEQPKSHSKFQLKHIYHHGSGKNYKIHRRLDITPEYLAKHDAYFQHFNQLQSGTEQVSLDNLDSVVAQYDWPKHHQGKNPWTIELPMKIAKRPAVRLKQRHDHNYIDSYLQYALSVKSNPQHINNVQLEWISEDISVPDVKDRDTVVSLATISSNAYVRFPKDDDEKKNSDWIDVGEPWVPDDRNNNIEFGWGDDGLRGHIFVSEDNKTVVIGVKGTSGAGLPGSGSEETQANDKTNDNLLFSCCCARISYMWTTVCDCYEKTYTCNQDCLEKELVRKDRYYQAVLDLYRNVTEIYPSESHDIWVTGHSLGGALASLLGRTYGLPVVAYEAPGEMLATQRLHLPQPPGLPKHAENIWHFGNTADPIFMGVCNGASSSCNLAGYALETACHTGRQCVYDVVTDKGWHVNLLNHRIHTVIDDIIMTYNDTAPCADQPPCRDCFNWRFTSRDDSLDDEPPLPNPLRPGKPSTTSSSQHHTSTTTTTETSRPQKCLKRTWYGWCVEWGDEEDA.

Residues 1-17 lie on the Cytoplasmic side of the membrane; it reads MGSKHKKNASKSLRAFS. The helical; Signal-anchor for type II membrane protein transmembrane segment at 18–38 threads the bilayer; sequence FIILSASIALVYIFNPVKLIF. Residues 39-566 lie on the Lumenal side of the membrane; the sequence is PSSIIRFHHG…CVEWGDEEDA (528 aa). Residues Asn264 and Asn348 are each glycosylated (N-linked (GlcNAc...) asparagine). Ser366 functions as the Charge relay system in the catalytic mechanism. Asn483 carries an N-linked (GlcNAc...) asparagine glycan. The segment at 507-545 is disordered; the sequence is DSLDDEPPLPNPLRPGKPSTTSSSQHHTSTTTTTETSRP. A compositionally biased stretch (low complexity) spans 522–543; it reads GKPSTTSSSQHHTSTTTTTETS.

This sequence belongs to the AB hydrolase superfamily. Lipase family. In terms of assembly, binds to both phosphatidylinositol (PI) and phosphatidylinositol 3,5-bisphosphate (PIP2).

It localises to the endosome. The protein localises to the multivesicular body membrane. The protein resides in the prevacuolar compartment membrane. The catalysed reaction is a triacylglycerol + H2O = a diacylglycerol + a fatty acid + H(+). In terms of biological role, lipase which is essential for lysis of subvacuolar cytoplasm to vacuole targeted bodies and intravacuolar autophagic bodies. Involved in the lysis of intravacuolar multivesicular body (MVB) vesicles. The intravacuolar membrane disintegration by ATG15 is critical to life span extension. The polypeptide is Putative lipase ATG15 (ATG15) (Meyerozyma guilliermondii (strain ATCC 6260 / CBS 566 / DSM 6381 / JCM 1539 / NBRC 10279 / NRRL Y-324) (Yeast)).